A 214-amino-acid polypeptide reads, in one-letter code: Probable nicotinate-nucleotide adenylyltransferase (214 aa).

It belongs to the NadD family.

It carries out the reaction nicotinate beta-D-ribonucleotide + ATP + H(+) = deamido-NAD(+) + diphosphate. The protein operates within cofactor biosynthesis; NAD(+) biosynthesis; deamido-NAD(+) from nicotinate D-ribonucleotide: step 1/1. In terms of biological role, catalyzes the reversible adenylation of nicotinate mononucleotide (NaMN) to nicotinic acid adenine dinucleotide (NaAD). The polypeptide is Probable nicotinate-nucleotide adenylyltransferase (Thermomicrobium roseum (strain ATCC 27502 / DSM 5159 / P-2)).